The chain runs to 503 residues: MLDLTFETPKPKTIAGAKHDWELVIGMEVHAQVASQAKLFSGASTAFGAEPNSNVSFVDAAMPGMLPVINEFCVEQAVRTGLGLKAEINLKSAFDRKNYFYPDLPQGYQISQLYHPIVGEGEVLVEMGDGTARRVRIERIHMEQDAGKSIHDMDPNMSFVDLNRTGVCLMEIVSRPDIRGPEEAAAYIAKLRQILRYLGTCDGNMQNGNLRADVNVSICRPGAYEKYQETQDFSHLGTRCEIKNMNSMRFIQAAIEYEARRQIAIVEAGGEVDQETRLYDPDKNETRSMRSKEEAHDYRYFPDPDLLPLEIEQAWVDDIAASLPELPDDKKARFIKEFGLTDYDASVLTAEVESARYFEEVAQGRNGKLAANWVINELFGRLKKEDHDITDSPVSPSQLGGIIDLIASDAISGKIAKDLFEIVYTEGGDPAEIVEARGMKQVTDTGAIEAALDEIIAANPAQVEKAKVNPKLAGWFVGQVMKATGGKANPGVVNQMVSKKLNG.

This sequence belongs to the GatB/GatE family. GatB subfamily. As to quaternary structure, heterotrimer of A, B and C subunits.

The catalysed reaction is L-glutamyl-tRNA(Gln) + L-glutamine + ATP + H2O = L-glutaminyl-tRNA(Gln) + L-glutamate + ADP + phosphate + H(+). The enzyme catalyses L-aspartyl-tRNA(Asn) + L-glutamine + ATP + H2O = L-asparaginyl-tRNA(Asn) + L-glutamate + ADP + phosphate + 2 H(+). Its function is as follows. Allows the formation of correctly charged Asn-tRNA(Asn) or Gln-tRNA(Gln) through the transamidation of misacylated Asp-tRNA(Asn) or Glu-tRNA(Gln) in organisms which lack either or both of asparaginyl-tRNA or glutaminyl-tRNA synthetases. The reaction takes place in the presence of glutamine and ATP through an activated phospho-Asp-tRNA(Asn) or phospho-Glu-tRNA(Gln). In Ruegeria pomeroyi (strain ATCC 700808 / DSM 15171 / DSS-3) (Silicibacter pomeroyi), this protein is Aspartyl/glutamyl-tRNA(Asn/Gln) amidotransferase subunit B.